Reading from the N-terminus, the 511-residue chain is ATP synthase subunit beta, mitochondrial (511 aa).

The transit peptide at 1-33 directs the protein to the mitochondrion; the sequence is MVLPRLYTATSRAAFKAAKQSAPLLSTSWKRCM. Thr-112 carries the post-translational modification Phosphothreonine. ATP is bound at residue 190-197; sequence GGAGVGKT. A Phosphothreonine modification is found at Thr-237. Ser-373 carries the post-translational modification Phosphoserine.

Belongs to the ATPase alpha/beta chains family. F-type ATPases have 2 components, CF(1) - the catalytic core - and CF(0) - the membrane proton channel. CF(1) has five subunits: alpha(3), beta(3), gamma(1), delta(1), epsilon(1). CF(0) has three main subunits: a, b and c.

The protein localises to the mitochondrion. Its subcellular location is the mitochondrion inner membrane. It carries out the reaction ATP + H2O + 4 H(+)(in) = ADP + phosphate + 5 H(+)(out). Functionally, mitochondrial membrane ATP synthase (F(1)F(0) ATP synthase or Complex V) produces ATP from ADP in the presence of a proton gradient across the membrane which is generated by electron transport complexes of the respiratory chain. F-type ATPases consist of two structural domains, F(1) - containing the extramembraneous catalytic core, and F(0) - containing the membrane proton channel, linked together by a central stalk and a peripheral stalk. During catalysis, ATP synthesis in the catalytic domain of F(1) is coupled via a rotary mechanism of the central stalk subunits to proton translocation. Subunits alpha and beta form the catalytic core in F(1). Rotation of the central stalk against the surrounding alpha(3)beta(3) subunits leads to hydrolysis of ATP in three separate catalytic sites on the beta subunits. The polypeptide is ATP synthase subunit beta, mitochondrial (ATP2) (Saccharomyces cerevisiae (strain ATCC 204508 / S288c) (Baker's yeast)).